A 320-amino-acid polypeptide reads, in one-letter code: o-succinylbenzoate synthase (320 aa).

The Proton donor role is filled by K133. Mg(2+)-binding residues include D161, E190, and D213. The active-site Proton acceptor is the K235.

Belongs to the mandelate racemase/muconate lactonizing enzyme family. MenC type 1 subfamily. A divalent metal cation is required as a cofactor.

The catalysed reaction is (1R,6R)-6-hydroxy-2-succinyl-cyclohexa-2,4-diene-1-carboxylate = 2-succinylbenzoate + H2O. The protein operates within quinol/quinone metabolism; 1,4-dihydroxy-2-naphthoate biosynthesis; 1,4-dihydroxy-2-naphthoate from chorismate: step 4/7. It functions in the pathway quinol/quinone metabolism; menaquinone biosynthesis. Functionally, converts 2-succinyl-6-hydroxy-2,4-cyclohexadiene-1-carboxylate (SHCHC) to 2-succinylbenzoate (OSB). The chain is o-succinylbenzoate synthase from Salmonella enteritidis PT4 (strain P125109).